A 33-amino-acid polypeptide reads, in one-letter code: Helofensin-1 (33 aa).

The protein belongs to the beta-defensin family. Helofensin subfamily. Expressed by the venom gland.

Its subcellular location is the secreted. Functionally, lethal toxin which possesses an inhibitory effect on direct electrical stimulation of the isolated hemi-diaphragm. Neither hemorrhagic nor hemolytic activities are detected. Phospholipase A2 activity, proteolytic activity and arginine esterolytic activity are absent. The protein is Helofensin-1 of Heloderma horridum horridum (Mexican beaded lizard).